The sequence spans 228 residues: L-ribulose-5-phosphate 4-epimerase UlaF (228 aa).

Substrate is bound by residues 26 to 27 (GN), 43 to 44 (SG), and 72 to 73 (SS). Residues D74, H93, and H95 each contribute to the Zn(2+) site. D118 functions as the Proton donor/acceptor in the catalytic mechanism. Residue H167 participates in Zn(2+) binding. Y225 functions as the Proton donor/acceptor in the catalytic mechanism.

This sequence belongs to the aldolase class II family. AraD/FucA subfamily. Zn(2+) serves as cofactor.

The enzyme catalyses L-ribulose 5-phosphate = D-xylulose 5-phosphate. It participates in cofactor degradation; L-ascorbate degradation; D-xylulose 5-phosphate from L-ascorbate: step 4/4. Catalyzes the isomerization of L-ribulose 5-phosphate to D-xylulose 5-phosphate. Is involved in the anaerobic L-ascorbate utilization. The sequence is that of L-ribulose-5-phosphate 4-epimerase UlaF from Escherichia coli (strain ATCC 8739 / DSM 1576 / NBRC 3972 / NCIMB 8545 / WDCM 00012 / Crooks).